Consider the following 140-residue polypeptide: Peptidyl-prolyl cis-trans isomerase FKBP2 (140 aa).

The signal sequence occupies residues 1–20 (MRLSWVLTVLSICLSALVTA). The region spanning 47–135 (GDVLHMHYTG…VFEVELLKIE (89 aa)) is the PPIase FKBP-type domain.

It belongs to the FKBP-type PPIase family. FKBP2 subfamily. In terms of assembly, interacts with ARFGEF1/BIG1 and the C-terminal of EPB41L2.

It is found in the endoplasmic reticulum membrane. The catalysed reaction is [protein]-peptidylproline (omega=180) = [protein]-peptidylproline (omega=0). Its activity is regulated as follows. Inhibited by both FK506 and rapamycin. Its function is as follows. PPIases accelerate the folding of proteins. It catalyzes the cis-trans isomerization of proline imidic peptide bonds in oligopeptides. This chain is Peptidyl-prolyl cis-trans isomerase FKBP2 (FKBP2), found in Bos taurus (Bovine).